The chain runs to 273 residues: 4-hydroxy-tetrahydrodipicolinate reductase (273 aa).

NAD(+)-binding positions include 12 to 17 (GAGGRM) and Glu38. An NADP(+)-binding site is contributed by Arg39. Residues 102 to 104 (GTT) and 126 to 129 (AANF) contribute to the NAD(+) site. Residue His159 is the Proton donor/acceptor of the active site. His160 provides a ligand contact to (S)-2,3,4,5-tetrahydrodipicolinate. The active-site Proton donor is Lys163. (S)-2,3,4,5-tetrahydrodipicolinate is bound at residue 169–170 (GT).

It belongs to the DapB family. In terms of assembly, homotetramer.

It localises to the cytoplasm. It carries out the reaction (S)-2,3,4,5-tetrahydrodipicolinate + NAD(+) + H2O = (2S,4S)-4-hydroxy-2,3,4,5-tetrahydrodipicolinate + NADH + H(+). The enzyme catalyses (S)-2,3,4,5-tetrahydrodipicolinate + NADP(+) + H2O = (2S,4S)-4-hydroxy-2,3,4,5-tetrahydrodipicolinate + NADPH + H(+). It participates in amino-acid biosynthesis; L-lysine biosynthesis via DAP pathway; (S)-tetrahydrodipicolinate from L-aspartate: step 4/4. In terms of biological role, catalyzes the conversion of 4-hydroxy-tetrahydrodipicolinate (HTPA) to tetrahydrodipicolinate. This Salmonella schwarzengrund (strain CVM19633) protein is 4-hydroxy-tetrahydrodipicolinate reductase.